The chain runs to 424 residues: Histidine--tRNA ligase (424 aa).

The protein belongs to the class-II aminoacyl-tRNA synthetase family. As to quaternary structure, homodimer.

It is found in the cytoplasm. The enzyme catalyses tRNA(His) + L-histidine + ATP = L-histidyl-tRNA(His) + AMP + diphosphate + H(+). The polypeptide is Histidine--tRNA ligase (Salmonella paratyphi B (strain ATCC BAA-1250 / SPB7)).